The following is a 211-amino-acid chain: Ferritin heavy chain (211 aa).

A signal peptide spans 1 to 20 (MNSILLVFAGILAVCLPASA). Residues 35–191 (ITMHRSCRNS…GKASTLKKLM (157 aa)) form the Ferritin-like diiron domain. Cysteine 41 and cysteine 150 are joined by a disulfide. Residues glutamate 52, glutamate 87, histidine 90, glutamate 136, and glutamine 173 each contribute to the Fe cation site.

It belongs to the ferritin family. In terms of assembly, oligomer of 12 light (L) chains and 12 heavy (H) chains; L and H chains are disulfide-linked. The functional molecule forms a roughly spherical shell with a diameter of 12 nm and contains a central cavity into which the insoluble ferric iron core is deposited.

It localises to the golgi apparatus. The protein localises to the secreted. It carries out the reaction 4 Fe(2+) + O2 + 4 H(+) = 4 Fe(3+) + 2 H2O. In terms of biological role, stores iron in a soluble, non-toxic, readily available form. Important for iron homeostasis. Iron is taken up in the ferrous form and deposited as ferric hydroxides after oxidation. Ferritin is composed of a heavy (H) chain which is responsible for the oxidation and uptake of ferrous iron, and a light (L) chain which facilitates the nucleation of the ferrihydrite iron core. The chain is Ferritin heavy chain from Trichoplusia ni (Cabbage looper).